A 443-amino-acid polypeptide reads, in one-letter code: MISHIKKFINLYTIVFLLYILYSNENFFVKGQKLPPGFCPSPLIYRNTTDRQSDIDIGFQFLGETNCVQPCPSLILTENEWNKVFNMSLVAGTISMFALIFLIITYSPLVNNIKDYTRHTVGILFLFSGILIAMTTDGRQLWDIDLGFKKYCPEPGRFARQSDSKCLVTAIFFQFGCVTALLWWAAISVDLWITIKKIKISKKLFIIYTIAVNIVTIVLTFGPVGSKQYGYIDAAIGCWLMDLKYQVGYFWAPVGFCLCVGCVSIVLILKEIYNVSDAVKKKLLAKHLKPLMLIILMLTEFIYMFIFYSYTTSKKNHYHDIIEEYVVCLFVHAANPSVCKIGSTISPSAHFFFHLCIRLMGLEVLIFYGFTRQTRKIWMRSFWFNNSFIKRFLPSISSSNDSKSSNNKTSGRVTGGFGESSEQSNEPEQSIELSGIDDSKHDP.

A signal peptide spans 1-23 (MISHIKKFINLYTIVFLLYILYS). At 24-83 (NENFFVKGQKLPPGFCPSPLIYRNTTDRQSDIDIGFQFLGETNCVQPCPSLILTENEWNK) the chain is on the extracellular side. A glycan (N-linked (GlcNAc...) asparagine) is linked at asparagine 47. A helical membrane pass occupies residues 84 to 104 (VFNMSLVAGTISMFALIFLII). Residues 105-120 (TYSPLVNNIKDYTRHT) lie on the Cytoplasmic side of the membrane. A helical membrane pass occupies residues 121–141 (VGILFLFSGILIAMTTDGRQL). The Extracellular segment spans residues 142-166 (WDIDLGFKKYCPEPGRFARQSDSKC). Residues 167-187 (LVTAIFFQFGCVTALLWWAAI) traverse the membrane as a helical segment. The Cytoplasmic segment spans residues 188-203 (SVDLWITIKKIKISKK). A helical membrane pass occupies residues 204 to 224 (LFIIYTIAVNIVTIVLTFGPV). The Extracellular segment spans residues 225 to 248 (GSKQYGYIDAAIGCWLMDLKYQVG). The helical transmembrane segment at 249–269 (YFWAPVGFCLCVGCVSIVLIL) threads the bilayer. Residues 270–289 (KEIYNVSDAVKKKLLAKHLK) lie on the Cytoplasmic side of the membrane. Residues 290–310 (PLMLIILMLTEFIYMFIFYSY) form a helical membrane-spanning segment. Residues 311–350 (TTSKKNHYHDIIEEYVVCLFVHAANPSVCKIGSTISPSAH) are Extracellular-facing. A helical transmembrane segment spans residues 351-371 (FFFHLCIRLMGLEVLIFYGFT). At 372-443 (RQTRKIWMRS…SGIDDSKHDP (72 aa)) the chain is on the cytoplasmic side. 2 stretches are compositionally biased toward low complexity: residues 397–410 (SSSN…NKTS) and 419–432 (ESSE…QSIE). Residues 397 to 443 (SSSNDSKSSNNKTSGRVTGGFGESSEQSNEPEQSIELSGIDDSKHDP) are disordered.

It belongs to the G-protein coupled receptor Fz/Smo family.

Its subcellular location is the membrane. This chain is Frizzled/smoothened-like sans CRD protein E (fscE), found in Dictyostelium discoideum (Social amoeba).